We begin with the raw amino-acid sequence, 289 residues long: Alpha-soluble NSF attachment protein (289 aa).

Residues 112–145 form a TPR repeat; the sequence is GKYYKEIAELYELEQNFEQAIIYFEKAADIYQSE.

The protein belongs to the SNAP family.

Its subcellular location is the membrane. Its function is as follows. Required for vesicular transport between the endoplasmic reticulum and the Golgi apparatus. The chain is Alpha-soluble NSF attachment protein from Vitis vinifera (Grape).